The sequence spans 326 residues: Ribonuclease H2 subunit A (326 aa).

Residues 1 to 47 (MKDDHDAWEPEELVSDNNSSENELQEDQNSSITFLPPSVNKSNPAKS) are disordered. Residues 15-47 (SDNNSSENELQEDQNSSITFLPPSVNKSNPAKS) are compositionally biased toward polar residues. Positions 63 to 286 (PYRLGVDEAG…AKDLLELPSK (224 aa)) constitute an RNase H type-2 domain. 3 residues coordinate a divalent metal cation: Asp-69, Glu-70, and Asp-180.

Belongs to the RNase HII family. Eukaryotic subfamily. Requires Mn(2+) as cofactor. The cofactor is Mg(2+).

The enzyme catalyses Endonucleolytic cleavage to 5'-phosphomonoester.. Functionally, endonuclease that specifically degrades the RNA of RNA-DNA hybrids. Participates in DNA replication. The sequence is that of Ribonuclease H2 subunit A (rnh201) from Schizosaccharomyces pombe (strain 972 / ATCC 24843) (Fission yeast).